We begin with the raw amino-acid sequence, 248 residues long: Ras-like protein family member 11B (248 aa).

Positions 29–246 (AGRRLVKIAV…ALSAKVRTVT (218 aa)) are small GTPase-like. GTP contacts are provided by residues 40–47 (GASGVGKT), 87–94 (DTPGIQVH), and 152–155 (NKAD). The tract at residues 205–226 (QQPSSTPEKRRTSLIPRPKSPN) is disordered.

It belongs to the small GTPase superfamily. Ras family. In terms of tissue distribution, widely expressed with highest levels in placenta and primary macrophages.

The catalysed reaction is GTP + H2O = GDP + phosphate + H(+). This is Ras-like protein family member 11B from Homo sapiens (Human).